Consider the following 121-residue polypeptide: Small ribosomal subunit protein uS13 (121 aa).

A disordered region spans residues 91 to 121 (HRKGLPLRGQRTRTNARTRKGPRKAGVALKK).

It belongs to the universal ribosomal protein uS13 family. Part of the 30S ribosomal subunit. Forms a loose heterodimer with protein S19. Forms two bridges to the 50S subunit in the 70S ribosome.

In terms of biological role, located at the top of the head of the 30S subunit, it contacts several helices of the 16S rRNA. In the 70S ribosome it contacts the 23S rRNA (bridge B1a) and protein L5 of the 50S subunit (bridge B1b), connecting the 2 subunits; these bridges are implicated in subunit movement. Contacts the tRNAs in the A and P-sites. This Cupriavidus pinatubonensis (strain JMP 134 / LMG 1197) (Cupriavidus necator (strain JMP 134)) protein is Small ribosomal subunit protein uS13.